Consider the following 123-residue polypeptide: MLQNSELLQEYLPIAIFFGIAVLVSGLIMILPNLLSTKKYNKDKLEPYECGFEPFSDARSKFDICFYLVAILFIIFDLEIAFLVPWAISLNTIGKIGFFSMMFFLFVLIIGFIYEWKKGALDW.

The next 3 membrane-spanning stretches (helical) occupy residues 11 to 31 (YLPI…IMIL), 64 to 84 (ICFY…AFLV), and 93 to 113 (IGKI…IGFI).

The protein belongs to the complex I subunit 3 family. In terms of assembly, NDH-1 is composed of 14 different subunits. Subunits NuoA, H, J, K, L, M, N constitute the membrane sector of the complex.

The protein resides in the cell inner membrane. The catalysed reaction is a quinone + NADH + 5 H(+)(in) = a quinol + NAD(+) + 4 H(+)(out). In terms of biological role, NDH-1 shuttles electrons from NADH, via FMN and iron-sulfur (Fe-S) centers, to quinones in the respiratory chain. The immediate electron acceptor for the enzyme in this species is believed to be ubiquinone. Couples the redox reaction to proton translocation (for every two electrons transferred, four hydrogen ions are translocated across the cytoplasmic membrane), and thus conserves the redox energy in a proton gradient. In Rickettsia conorii (strain ATCC VR-613 / Malish 7), this protein is NADH-quinone oxidoreductase subunit A.